The primary structure comprises 884 residues: DNA mismatch repair protein MutS (884 aa).

Gly643 to Ser650 is an ATP binding site.

The protein belongs to the DNA mismatch repair MutS family.

Its function is as follows. This protein is involved in the repair of mismatches in DNA. It is possible that it carries out the mismatch recognition step. This protein has a weak ATPase activity. The protein is DNA mismatch repair protein MutS of Methylobacillus flagellatus (strain ATCC 51484 / DSM 6875 / VKM B-1610 / KT).